An 83-amino-acid chain; its full sequence is Small cysteine-rich protein 3 (83 aa).

Positions 1–21 are cleaved as a signal peptide; that stretch reads MGVKLNICLLLLLVAIISSQG. A propeptide spanning residues 22 to 39 is cleaved from the precursor; the sequence is FNLRKKEDSKDEKPFGNY. Residues 25–35 are compositionally biased toward basic and acidic residues; the sequence is RKKEDSKDEKP. Positions 25–44 are disordered; the sequence is RKKEDSKDEKPFGNYRRGSP.

It belongs to the Cnidaria small cysteine-rich protein (SCRiP) family. alpha subfamily. In terms of processing, contains 4 disulfide bonds.

It is found in the secreted. Its subcellular location is the nematocyst. Its function is as follows. This recombinant protein induces severe neurotoxicity on zebrafish larvae (Danio rerio) at a concentration of 230 mg/ml, but does not show toxicity when injected in blowfly larvae (Sarcophaga falculata). All fish incubated with this protein died within 16 hours of exposure. Has also been claimed to be implied in calcification, but this function seems improbable. The protein is Small cysteine-rich protein 3 of Acropora millepora (Staghorn coral).